Reading from the N-terminus, the 728-residue chain is Peroxisome biogenesis protein 5 (728 aa).

Residues 1–58 (MAMRDLVNGGAACAVPGSSSSSNPLGALTNALLGSSSKTQERLKEIPNANRSGPRPQF) are disordered. Residues 11–97 (AACAVPGSSS…FRGFRSVDQN (87 aa)) are amphipathic helix 1 (AH1). A Glycyl cysteine thioester (Cys-Gly) (interchain with G-Cter in ubiquitin) cross-link involves residue C13. 3 tandem repeats follow at residues 240–244 (WAAEF), 257–261 (WVQSF), and 270–274 (WATEF). Short sequence motifs (wxxxF/Y motif) lie at residues 240 to 244 (WAAEF), 257 to 261 (WVQSF), and 270 to 274 (WATEF). Residues 288-311 (SMDMQNIAAMEQTRKLAHTLSQDG) form an amphipathic helix 3 (AH3) region. A run of 6 repeats spans residues 348 to 352 (WATEY), 362 to 366 (WADQF), 378 to 382 (WADEF), 396 to 400 (WVNEF), 408 to 412 (WIDEF), and 425 to 429 (WANAY). 6 short sequence motifs (wxxxF/Y motif) span residues 348-352 (WATEY), 362-366 (WADQF), 378-382 (WADEF), 396-400 (WVNEF), 408-412 (WIDEF), and 425-429 (WANAY). The tract at residues 392 to 417 (AEDQWVNEFSKLNVDDWIDEFAEGPV) is amphipathic helix 4 (AH4). TPR repeat units lie at residues 491 to 524 (AEGW…DPTN), 590 to 623 (ADVH…KPND), 625 to 657 (SLWN…KPNY), and 658 to 691 (VRAW…NPKA).

This sequence belongs to the peroxisomal targeting signal receptor family. As to quaternary structure, interacts (via WxxxF/Y and LVxEF motifs) with PEX14; promoting translocation through the PEX13-PEX14 docking complex. Interacts with PEX7, promoting peroxisomal import of proteins containing a C-terminal PTS2-type peroxisomal targeting signal. Interacts with LACS7. Monoubiquitinated at Cys-13 by PEX2 during PEX5 passage through the retrotranslocation channel. Cys-13 monoubiquitination acts as a recognition signal for the PEX1-PEX6 complex and is required for PEX5 extraction and export from peroxisomes. When PEX5 recycling is compromised, polyubiquitinated by PEX10 during its passage through the retrotranslocation channel, leading to its degradation. As to expression, expressed in flowers, siliques, leaves and roots.

The protein localises to the cytoplasm. It is found in the cytosol. Its subcellular location is the peroxisome matrix. Receptor that mediates peroxisomal import of proteins containing a C-terminal PTS1-type tripeptide peroxisomal targeting signal (SKL-type). Binds to cargo proteins containing a PTS1 peroxisomal targeting signal in the cytosol, and translocates them into the peroxisome matrix by passing through the PEX13-PEX14 docking complex along with cargo proteins. PEX5 receptor is then retrotranslocated into the cytosol, leading to release of bound cargo in the peroxisome matrix, and reset for a subsequent peroxisome import cycle. In addition to promoting peroxisomal translocation of proteins containing a PTS1 peroxisomal targeting signal, mediates peroxisomal import of proteins containing a C-terminal PTS2-type peroxisomal targeting signal via its interaction with PEX7. Interaction with PEX7 only takes place when PEX7 is associated with cargo proteins containing a PTS2 peroxisomal targeting signal. PEX7 along with PTS2-containing cargo proteins are then translocated through the PEX13-PEX14 docking complex together with PEX5. Necessary for the developmental elimination of obsolete peroxisome matrix proteins. The polypeptide is Peroxisome biogenesis protein 5 (PEX5) (Arabidopsis thaliana (Mouse-ear cress)).